The primary structure comprises 873 residues: Paramyosin (873 aa).

The segment at 1 to 25 (MSSRSSKYMYKSSGGAGDISIEYGT) is nonhelical region. Residues 26–852 (DLGALTRLED…IRAKHRSWVT (827 aa)) are a coiled coil. The segment at 853–873 (TSQVPGGTRQVFVTEESSQNF) is nonhelical region.

This sequence belongs to the paramyosin family. In terms of assembly, homodimer. Binds IgG and collagen. As to expression, expressed in all tissues except in saliva.

Its subcellular location is the cytoplasm. It is found in the myofibril. Paramyosin is a major structural component of many thick filaments isolated from invertebrate muscles. This Rhipicephalus microplus (Cattle tick) protein is Paramyosin (PRM).